The primary structure comprises 55 residues: uncharacterized protein (55 aa).

The protein resides in the plastid. This is an uncharacterized protein from Cuscuta reflexa (Southern Asian dodder).